A 481-amino-acid polypeptide reads, in one-letter code: CASP8 and FADD-like apoptosis regulator (481 aa).

2 consecutive DED domains span residues 6–78 (VSAE…RILK) and 97–172 (DYRV…LNTK). The interval 6–200 (VSAEVIHQVE…QASLPKLSIK (195 aa)) is interaction with CASP8. Positions 6 to 229 (VSAEVIHQVE…DSQRTLVKTS (224 aa)) are interaction with FADD. An interaction with CASP8 propeptide region spans residues 6 to 307 (VSAEVIHQVE…YASMAQHQDY (302 aa)). The interval 197-436 (LSIKYNSRLQ…KLSQQLKQGR (240 aa)) is interaction with CASP3. The interval 197–481 (LSIKYNSRLQ…LRKKLILAPT (285 aa)) is interaction with TRAF1 and TRAF2. Positions 219 to 481 (RDSQRTLVKT…LRKKLILAPT (263 aa)) are interaction with CASP8 subunits p18 and p10. A caspase region spans residues 265 to 360 (DTKYLQETFT…RGKPKLFFIQ (96 aa)). The segment at 372–481 (SSLEVDGPSI…LRKKLILAPT (110 aa)) is interaction with CASP8.

Belongs to the peptidase C14A family. In terms of assembly, TNFRSF6 stimulation triggers recruitment to the death-inducing signaling complex (DISC) formed by TNFRSF6, FADD and CASP8. A proteolytic fragment (p43) stays associated with the DISC. Interacts with RIPK1. In terms of processing, proteolytically processed by CASP8 generating subunits p43 and p12. Highly expressed in heart.

Apoptosis regulator protein which may function as a crucial link between cell survival and cell death pathways in mammalian cells. Acts as an inhibitor of TNFRSF6 mediated apoptosis. A proteolytic fragment (p43) is likely retained in the death-inducing signaling complex (DISC) thereby blocking further recruitment and processing of caspase-8 at the complex. Full length and shorter isoforms have been shown either to induce apoptosis or to reduce TNFRSF-triggered apoptosis. Lacks enzymatic (caspase) activity. This is CASP8 and FADD-like apoptosis regulator (Cflar) from Mus musculus (Mouse).